The following is a 137-amino-acid chain: Small ribosomal subunit protein uS11 (137 aa).

The tract at residues 116–137 (EDVTPVPSDSTRKKGGRRGRRL) is disordered. The span at 128-137 (KKGGRRGRRL) shows a compositional bias: basic residues.

Belongs to the universal ribosomal protein uS11 family.

This is Small ribosomal subunit protein uS11 (RPS14) from Kluyveromyces lactis (strain ATCC 8585 / CBS 2359 / DSM 70799 / NBRC 1267 / NRRL Y-1140 / WM37) (Yeast).